The following is a 348-amino-acid chain: Phenylalanine--tRNA ligase alpha subunit (348 aa).

Glutamate 259 serves as a coordination point for Mg(2+).

This sequence belongs to the class-II aminoacyl-tRNA synthetase family. Phe-tRNA synthetase alpha subunit type 1 subfamily. In terms of assembly, tetramer of two alpha and two beta subunits. The cofactor is Mg(2+).

It localises to the cytoplasm. It carries out the reaction tRNA(Phe) + L-phenylalanine + ATP = L-phenylalanyl-tRNA(Phe) + AMP + diphosphate + H(+). The sequence is that of Phenylalanine--tRNA ligase alpha subunit from Enterococcus faecalis (strain ATCC 700802 / V583).